A 291-amino-acid polypeptide reads, in one-letter code: tRNA dimethylallyltransferase (291 aa).

5–12 (GPTAGGKS) lines the ATP pocket. 7–12 (TAGGKS) lines the substrate pocket. The tract at residues 30-33 (DSMQ) is interaction with substrate tRNA.

Belongs to the IPP transferase family. In terms of assembly, monomer. The cofactor is Mg(2+).

The catalysed reaction is adenosine(37) in tRNA + dimethylallyl diphosphate = N(6)-dimethylallyladenosine(37) in tRNA + diphosphate. Its function is as follows. Catalyzes the transfer of a dimethylallyl group onto the adenine at position 37 in tRNAs that read codons beginning with uridine, leading to the formation of N6-(dimethylallyl)adenosine (i(6)A). The sequence is that of tRNA dimethylallyltransferase from Frankia casuarinae (strain DSM 45818 / CECT 9043 / HFP020203 / CcI3).